We begin with the raw amino-acid sequence, 285 residues long: Bifunctional protein FolD (285 aa).

NADP(+)-binding positions include 165–167 (GRG), T192, and V233.

This sequence belongs to the tetrahydrofolate dehydrogenase/cyclohydrolase family. Homodimer.

It catalyses the reaction (6R)-5,10-methylene-5,6,7,8-tetrahydrofolate + NADP(+) = (6R)-5,10-methenyltetrahydrofolate + NADPH. The catalysed reaction is (6R)-5,10-methenyltetrahydrofolate + H2O = (6R)-10-formyltetrahydrofolate + H(+). Its pathway is one-carbon metabolism; tetrahydrofolate interconversion. Catalyzes the oxidation of 5,10-methylenetetrahydrofolate to 5,10-methenyltetrahydrofolate and then the hydrolysis of 5,10-methenyltetrahydrofolate to 10-formyltetrahydrofolate. This chain is Bifunctional protein FolD, found in Corynebacterium jeikeium (strain K411).